The sequence spans 749 residues: Disintegrin and metalloproteinase domain-containing protein 10 (749 aa).

The signal sequence occupies residues 1–18 (MGLLRLVFLLSWAASAGG). A propeptide spanning residues 19-213 (LYGNPLNKYI…SGPVILRKKR (195 aa)) is cleaved from the precursor. At 19-673 (LYGNPLNKYI…NPELYENIAE (655 aa)) the chain is on the extracellular side. The Cysteine switch signature appears at 170-177 (GGCADSSV). C172 is a binding site for Zn(2+). One can recognise a Peptidase M12B domain in the interval 220 to 457 (NTCQLFIQTD…KENSCFVESG (238 aa)). 17 disulfide bridges follow: C222/C314, C345/C452, C400/C436, C461/C496, C472/C485, C474/C480, C484/C516, C504/C512, C511/C537, C525/C544, C531/C563, C556/C568, C573/C599, C581/C608, C583/C598, C595/C640, and C633/C646. 2 N-linked (GlcNAc...) asparagine glycosylation sites follow: N268 and N279. H384 serves as a coordination point for Zn(2+). The active site involves E385. Zn(2+) is bound by residues H388 and H394. N440 carries N-linked (GlcNAc...) asparagine glycosylation. The Disintegrin domain occupies 458-552 (QPICGNGLVE…QCPPSEPREN (95 aa)). N552 is a glycosylation site (N-linked (GlcNAc...) asparagine). A helical transmembrane segment spans residues 674-694 (WIVAHWWAVLLMGIALIMLMA). Residues 695–749 (GFIKICSVHTPSSNPKLPPPKPLPGTLKRRRPPQTTQQPSRQRPRENYQMGHMRH) are Cytoplasmic-facing. The segment at 705-749 (PSSNPKLPPPKPLPGTLKRRRPPQTTQQPSRQRPRENYQMGHMRH) is disordered. An SH3-binding motif is present at residues 709–716 (PKLPPPKP). T720 is subject to Phosphothreonine. The SH3-binding signature appears at 723-729 (RRRPPQT).

Requires Zn(2+) as cofactor. In terms of processing, the precursor is cleaved by furin and PCSK7.

It is found in the membrane. It catalyses the reaction Endopeptidase of broad specificity.. Controls the proteolytic processing of Notch and mediates lateral inhibition during neurogenesis. The protein is Disintegrin and metalloproteinase domain-containing protein 10 (adam10) of Xenopus laevis (African clawed frog).